A 365-amino-acid chain; its full sequence is Popy Class I histocompatibility antigen, A-1 alpha chain (365 aa).

Positions 1-24 are cleaved as a signal peptide; sequence MAIMAPRTLLLLLSGALALTQTWA. The tract at residues 25–114 is alpha-1; the sequence is GSHSMRYFST…LRGYYNQSDG (90 aa). Topologically, residues 25–308 are extracellular; it reads GSHSMRYFST…ELSSQPTIPI (284 aa). A glycan (N-linked (GlcNAc...) asparagine) is linked at N110. Positions 115–206 are alpha-2; it reads GSHTIQRMFG…ENGKETLQRT (92 aa). Cystine bridges form between C125-C188 and C227-C283. Residues 207 to 298 are alpha-3; it reads DAPKTHMTHH…GLPEPLTLRW (92 aa). The Ig-like C1-type domain maps to 209–297; the sequence is PKTHMTHHPV…EGLPEPLTLR (89 aa). The interval 299 to 308 is connecting peptide; it reads ELSSQPTIPI. The helical transmembrane segment at 309 to 332 threads the bilayer; that stretch reads VGIIAGLVLLGAVITGAVVAAVMW. At 333–365 the chain is on the cytoplasmic side; sequence RRRNSDRKGGSYSQAASNDSAQGSDVSLTACKV. The disordered stretch occupies residues 340–365; the sequence is KGGSYSQAASNDSAQGSDVSLTACKV. S343 carries the post-translational modification Phosphoserine. Polar residues predominate over residues 343 to 359; it reads SYSQAASNDSAQGSDVS. The residue at position 344 (Y344) is a Phosphotyrosine. Phosphoserine occurs at positions 345, 349, 352, 356, and 359.

Belongs to the MHC class I family. As to quaternary structure, heterodimer of an alpha chain and a beta chain (beta-2-microglobulin).

It localises to the membrane. In terms of biological role, involved in the presentation of foreign antigens to the immune system. The chain is Popy Class I histocompatibility antigen, A-1 alpha chain from Pongo pygmaeus (Bornean orangutan).